The following is a 286-amino-acid chain: Flagellin FlaB1 (286 aa).

Residues 231-286 (LDIAAENLQAAESRIRDANIAKQMVEYTKNQVLTQSGTAMLAQANTSAQSILSILR) are required for interaction with FliW.

This sequence belongs to the bacterial flagellin family. As to quaternary structure, the flagellum consists of an outer layer composed of repeating units of FlaA around a core that contains several antigenically related polypeptides. Interacts via its C-terminus with FliW; a synthetic peptide of residues 229-247 partially blocks binding to FliW.

The protein localises to the periplasmic flagellum. It localises to the periplasm. In terms of biological role, component of the core of the flagella. The chain is Flagellin FlaB1 (flaB1) from Treponema pallidum (strain Nichols).